The chain runs to 414 residues: Na(+)-translocating NADH-quinone reductase subunit B (414 aa).

4 consecutive transmembrane segments (helical) span residues 56-76, 82-104, 129-149, and 164-184; these read IMIM…YNVG, ALNH…HYWL, FLPI…LFCM, and ILFA…LGIT. The residue at position 236 (Thr-236) is an FMN phosphoryl threonine. Helical transmembrane passes span 275-295, 297-317, 325-345, 358-378, and 381-401; these read VSTL…IASW, IIAG…VIGS, MPWH…FMAT, WAYG…NPAY, and GMML…HIVI.

It belongs to the NqrB/RnfD family. As to quaternary structure, composed of six subunits; NqrA, NqrB, NqrC, NqrD, NqrE and NqrF. It depends on FMN as a cofactor.

Its subcellular location is the cell inner membrane. It catalyses the reaction a ubiquinone + n Na(+)(in) + NADH + H(+) = a ubiquinol + n Na(+)(out) + NAD(+). In terms of biological role, NQR complex catalyzes the reduction of ubiquinone-1 to ubiquinol by two successive reactions, coupled with the transport of Na(+) ions from the cytoplasm to the periplasm. NqrA to NqrE are probably involved in the second step, the conversion of ubisemiquinone to ubiquinol. The polypeptide is Na(+)-translocating NADH-quinone reductase subunit B (Vibrio anguillarum (Listonella anguillarum)).